A 121-amino-acid chain; its full sequence is Small ribosomal subunit protein uS13 (121 aa).

Positions 94 to 121 (DLPVRGQRTKTNARTRKGPRKSGVQLKK) are disordered. Residues 100-121 (QRTKTNARTRKGPRKSGVQLKK) are compositionally biased toward basic residues.

The protein belongs to the universal ribosomal protein uS13 family. Part of the 30S ribosomal subunit. Forms a loose heterodimer with protein S19. Forms two bridges to the 50S subunit in the 70S ribosome.

In terms of biological role, located at the top of the head of the 30S subunit, it contacts several helices of the 16S rRNA. In the 70S ribosome it contacts the 23S rRNA (bridge B1a) and protein L5 of the 50S subunit (bridge B1b), connecting the 2 subunits; these bridges are implicated in subunit movement. Contacts the tRNAs in the A and P-sites. The polypeptide is Small ribosomal subunit protein uS13 (Polynucleobacter necessarius subsp. necessarius (strain STIR1)).